Consider the following 397-residue polypeptide: Alanine racemase, biosynthetic (397 aa).

The active-site Proton acceptor; specific for D-alanine is the Lys-42. Lys-42 carries the N6-(pyridoxal phosphate)lysine modification. Arg-136 contributes to the substrate binding site. The active-site Proton acceptor; specific for L-alanine is the Tyr-257. Residue Met-305 coordinates substrate. Positions 373–397 (ANRPTEAMSNPSRAKSRPMDKQALI) are disordered.

It belongs to the alanine racemase family. It depends on pyridoxal 5'-phosphate as a cofactor.

It carries out the reaction L-alanine = D-alanine. The protein operates within amino-acid biosynthesis; D-alanine biosynthesis; D-alanine from L-alanine: step 1/1. It participates in cell wall biogenesis; peptidoglycan biosynthesis. Functionally, catalyzes the interconversion of L-alanine and D-alanine. Provides the D-alanine required for cell wall biosynthesis. This Mesorhizobium japonicum (strain LMG 29417 / CECT 9101 / MAFF 303099) (Mesorhizobium loti (strain MAFF 303099)) protein is Alanine racemase, biosynthetic (alr).